A 430-amino-acid polypeptide reads, in one-letter code: Putative O-antigen transporter (430 aa).

The next 12 membrane-spanning stretches (helical) occupy residues 23-39, 45-61, 96-112, 131-147, 163-179, 192-208, 236-252, 266-282, 309-325, 342-358, 373-389, and 400-416; these read IIIA…LISM, YAIF…CSAV, IAII…SGVI, LFFT…IGAI, LLNA…LLYI, LIVL…CYIV, LFTL…YMVI, VTMK…TAIL, ILLG…FIYL, VSIL…CIRV, LKIL…IGGI, and ISGV…LTVF.

Its subcellular location is the cell inner membrane. Its pathway is bacterial outer membrane biogenesis; LPS O-antigen biosynthesis. May be involved in the translocation process of the nascent O-polysaccharide molecules and/or its ligation to lipid A core units. The polypeptide is Putative O-antigen transporter (rfbX) (Salmonella typhimurium (strain LT2 / SGSC1412 / ATCC 700720)).